The sequence spans 35 residues: Photosystem II reaction center protein T (35 aa).

Residues 3–23 traverse the membrane as a helical segment; that stretch reads ALVYTFLLVSTLGIIFFAIFF.

Belongs to the PsbT family. PSII is composed of 1 copy each of membrane proteins PsbA, PsbB, PsbC, PsbD, PsbE, PsbF, PsbH, PsbI, PsbJ, PsbK, PsbL, PsbM, PsbT, PsbY, PsbZ, Psb30/Ycf12, at least 3 peripheral proteins of the oxygen-evolving complex and a large number of cofactors. It forms dimeric complexes.

The protein resides in the plastid. The protein localises to the chloroplast thylakoid membrane. Functionally, found at the monomer-monomer interface of the photosystem II (PS II) dimer, plays a role in assembly and dimerization of PSII. PSII is a light-driven water plastoquinone oxidoreductase, using light energy to abstract electrons from H(2)O, generating a proton gradient subsequently used for ATP formation. The protein is Photosystem II reaction center protein T of Taxus brevifolia (Pacific yew).